The following is a 918-amino-acid chain: Non-lysosomal glucosylceramidase (918 aa).

The segment at 886 to 918 is disordered; sequence HKKSRRPSVTQGTGLSTQPECGPKRSLANLNSE. A compositionally biased stretch (polar residues) spans 892–904; it reads PSVTQGTGLSTQP. Ser893 is subject to Phosphoserine.

It belongs to the non-lysosomal glucosylceramidase family. As to expression, widely expressed at low level. Highly expressed in testis and brain. Ubiquitously expressed in the brain (at protein level). Expressed by Sertoli cells (at protein level).

The protein localises to the endoplasmic reticulum membrane. It localises to the golgi apparatus membrane. It catalyses the reaction a beta-D-glucosyl-(1&lt;-&gt;1')-N-acylsphing-4-enine + H2O = an N-acylsphing-4-enine + D-glucose. The enzyme catalyses a beta-D-galactosyl-(1&lt;-&gt;1')-N-acylsphing-4-enine + H2O = an N-acylsphing-4-enine + D-galactose. It carries out the reaction beta-D-glucosyl-(1-&gt;3)-O-lithocholate + H2O = lithocholate + D-glucose. The catalysed reaction is beta-D-glucosyl-(1-&gt;3)-O-chenodeoxycholate + H2O = chenodeoxycholate + D-glucose. It catalyses the reaction a di-trans,poly-cis-dolichyl beta-D-glucosyl phosphate + chenodeoxycholate = beta-D-glucosyl-(1-&gt;3)-O-chenodeoxycholate + a di-trans,poly-cis-dolichyl phosphate + H(+). The enzyme catalyses octyl beta-D-glucose + chenodeoxycholate = beta-D-glucosyl-(1-&gt;3)-O-chenodeoxycholate + octan-1-ol. It carries out the reaction cholesteryl 3-beta-D-glucoside + H2O = cholesterol + D-glucose. The catalysed reaction is a beta-D-glucosyl-(1&lt;-&gt;1')-N-acylsphing-4-enine + cholesterol = cholesteryl 3-beta-D-glucoside + an N-acylsphing-4-enine. It catalyses the reaction beta-D-glucosyl-N-(9Z-octadecenoyl)-sphing-4E-enine + cholesterol = N-(9Z-octadecenoyl)-sphing-4-enine + cholesteryl 3-beta-D-glucoside. The enzyme catalyses a beta-D-galactosyl-(1&lt;-&gt;1')-N-acylsphing-4-enine + cholesterol = cholesteryl 3-beta-D-galactoside + an N-acylsphing-4-enine. It carries out the reaction 1-(beta-D-galactosyl)-N-dodecanoylsphing-4-enine + cholesterol = cholesteryl 3-beta-D-galactoside + N-dodecanoylsphing-4-enine. Its pathway is lipid metabolism; sphingolipid metabolism. It functions in the pathway steroid metabolism; cholesterol metabolism. With respect to regulation, enzymatic activity is dependent on membrane association and requires the presence of lipids. Inhibited by N-(adamantanemethyloxypentyl)-deoxynojirimycin/AMP-DNM. Inhibited by its product sphingosine/N-acylsphing-4-enine in a feedback loop. Also inhibited by other non-acetylated sphingoid bases and their derivatives but not by sphingosine-1-phosphate and complex sphingolipids. Non-lysosomal glucosylceramidase that catalyzes the hydrolysis of glucosylceramides/GlcCers (such as beta-D-glucosyl-(1&lt;-&gt;1')-N-acylsphing-4-enine) to free glucose and ceramides (such as N-acylsphing-4-enine). GlcCers are membrane glycosphingolipids that have a wide intracellular distribution. They are the main precursors of more complex glycosphingolipids that play a role in cellular growth, differentiation, adhesion, signaling, cytoskeletal dynamics and membrane properties. Also involved in the transglucosylation of cholesterol, transferring glucose from GlcCer, thereby modifying its water solubility and biological properties. Under specific conditions, may catalyze the reverse reaction, transferring glucose from cholesteryl-3-beta-D-glucoside to ceramide (such as N-acylsphing-4-enine). May play a role in the metabolism of bile acids. Able to hydrolyze bile acid 3-O-glucosides as well as to produce bile acid-glucose conjugates thanks to a bile acid glucosyl transferase activity. Catalyzes the hydrolysis of galactosylceramides/GalCers (such as beta-D-galactosyl-(1&lt;-&gt;1')-N-acylsphing-4-enine), as well as galactosyl transfer between GalCers and cholesterol in vitro with lower activity compared with their activity against GlcCers. The protein is Non-lysosomal glucosylceramidase of Mus musculus (Mouse).